The chain runs to 376 residues: Sulfate/thiosulfate import ATP-binding protein CysA (376 aa).

In terms of domain architecture, ABC transporter spans 3–237; it reads IRLDNISKHF…PNSRFVFDFF (235 aa). 35–42 is a binding site for ATP; that stretch reads GPSGSGKT.

The protein belongs to the ABC transporter superfamily. Sulfate/tungstate importer (TC 3.A.1.6) family. In terms of assembly, the complex is composed of two ATP-binding proteins (CysA), two transmembrane proteins (CysT and CysW) and a solute-binding protein (CysP).

The protein resides in the cell inner membrane. The catalysed reaction is sulfate(out) + ATP + H2O = sulfate(in) + ADP + phosphate + H(+). It catalyses the reaction thiosulfate(out) + ATP + H2O = thiosulfate(in) + ADP + phosphate + H(+). Its function is as follows. Part of the ABC transporter complex CysAWTP involved in sulfate/thiosulfate import. Responsible for energy coupling to the transport system. The chain is Sulfate/thiosulfate import ATP-binding protein CysA from Vibrio cholerae serotype O1 (strain ATCC 39315 / El Tor Inaba N16961).